We begin with the raw amino-acid sequence, 2031 residues long: Pericentriolar material 1 protein (2031 aa).

Disordered regions lie at residues 1 to 82 (MATG…HTFP) and 111 to 165 (DQRS…STRS). Residues 1 to 484 (MATGGGPPDE…RSTEQRTLGS (484 aa)) are self-association. Residues 42-58 (RSAEKNKKKFVECDLRL) show a composition bias toward basic and acidic residues. Polar residues predominate over residues 114 to 130 (SIGSDSQGRATAANNKR). The segment covering 149–162 (NKEKSKSPPKREAS) has biased composition (basic and acidic residues). The stretch at 302–394 (RQEAKEELKN…FHNQLHDSED (93 aa)) forms a coiled coil. Over residues 469–494 (SSVSPRRSTEQRTLGSAVSSALTSDN) the composition is skewed to polar residues. The tract at residues 469-495 (SSVSPRRSTEQRTLGSAVSSALTSDNR) is disordered. The stretch at 523-549 (AEKLKKLKEVRKRLNELRELVHYYEQT) forms a coiled coil. 2 disordered regions span residues 550–590 (SDMM…NPQY) and 649–678 (KEED…NSVA). Positions 562–580 (KDEDETEDSEYDSEQEDAE) are enriched in acidic residues. Polar residues-rich tracts occupy residues 581–590 (PTTNIRNPQY) and 667–677 (SRASLSSQNSV). Residues 684–711 (VDFEQKFNRLVAAKQKLKQLQDLVAMYG) are a coiled coil. Residues 712–752 (DDSESEPVAPERSFSGDQFPPEATTLKQQPNNTRPNVSKAQ) form a disordered region. The span at 736–750 (TLKQQPNNTRPNVSK) shows a compositional bias: polar residues. The segment at 745–1271 (RPNVSKAQKD…PACFGAGLSA (527 aa)) is self-association and localization to centrosomes. Residues 757–805 (LKEQAREKFYESKLQQQQRELSQLQEERKKLIEIQEKIQTLRKACPDLQ) adopt a coiled-coil conformation. Composition is skewed to polar residues over residues 806 to 823 (LSTS…NRQM) and 888 to 898 (QGNTETTSAAS). 2 disordered regions span residues 806 to 835 (LSTS…VNTN) and 882 to 1014 (AEHQ…VSMR). Residues 858-892 (SEIRKHQILREDLRQRRKQLETLMAEHQRRQGNTE) are a coiled coil. Acidic residues predominate over residues 930-945 (LEEEEEEEEVDDEECL). 2 stretches are compositionally biased toward polar residues: residues 960-981 (NTSC…FNGR) and 1004-1013 (KTRQQQNVSM). A coiled-coil region spans residues 1025–1049 (LSHVEEKEHWQEQIDQIKKQLDYST). Disordered regions lie at residues 1123 to 1146 (QHLQ…TSPN), 1219 to 1247 (KPFE…QGRR), 1318 to 1345 (SAQA…QKSK), and 1514 to 1533 (PVCQ…LSTS). Composition is skewed to basic and acidic residues over residues 1127–1136 (GESHQREDRG) and 1221–1247 (FESH…QGRR). The span at 1331–1345 (KAKNKKRKVFHQKSK) shows a compositional bias: basic residues. Over residues 1524 to 1533 (GDNISSLSTS) the composition is skewed to polar residues. Residues 1550–1599 (HFDQALARMREYERMKSETENGLVADCCNNLNAAASSLEGTNDEARGRAQ) adopt a coiled-coil conformation. Disordered regions lie at residues 1746–1802 (ADKE…DLDE), 1817–1870 (ALTN…EANI), 1922–1965 (NNVK…DEDD), and 2007–2031 (ENGA…IHPA). Basic and acidic residues predominate over residues 1771 to 1784 (KDETETAEENRNFD). Residues 1824 to 1835 (GEDENEDEENYE) show a composition bias toward acidic residues. 2 stretches are compositionally biased toward polar residues: residues 1843–1852 (VQTSLETSSE) and 1922–1942 (NNVK…SDTE).

It belongs to the PCM1 family. Self-associates. Interacts with cetn3.

The protein resides in the cytoplasm. Its subcellular location is the cytoskeleton. It is found in the microtubule organizing center. It localises to the centrosome. The protein localises to the cytoplasmic granule. The protein resides in the centriolar satellite. Its subcellular location is the cilium basal body. Its function is as follows. Required to anchor microtubules to the centrosome. Required for centrosome assembly and function. Essential for the correct localization of several centrosomal proteins including cetn3 and pcnt. Probably involved in the biogenesis of cilia. The sequence is that of Pericentriolar material 1 protein (pcm1) from Xenopus laevis (African clawed frog).